The chain runs to 505 residues: Protein phosphatase 1J (505 aa).

A disordered region spans residues M1–W103. Over residues D27–A50 the composition is skewed to low complexity. S66 and S76 each carry phosphoserine. One can recognise a PPM-type phosphatase domain in the interval S104–L498.

Belongs to the PP2C family. As to quaternary structure, interacts with UBE2I/UBC9.

It catalyses the reaction O-phospho-L-seryl-[protein] + H2O = L-seryl-[protein] + phosphate. It carries out the reaction O-phospho-L-threonyl-[protein] + H2O = L-threonyl-[protein] + phosphate. In Homo sapiens (Human), this protein is Protein phosphatase 1J (PPM1J).